We begin with the raw amino-acid sequence, 225 residues long: Small ribosomal subunit protein uS3 (225 aa).

Positions 38–106 (LRAFLRRKLS…DVALNIVEIR (69 aa)) constitute a KH type-2 domain.

The protein belongs to the universal ribosomal protein uS3 family. Part of the 30S ribosomal subunit. Forms a tight complex with proteins S10 and S14.

Functionally, binds the lower part of the 30S subunit head. Binds mRNA in the 70S ribosome, positioning it for translation. This Gluconobacter oxydans (strain 621H) (Gluconobacter suboxydans) protein is Small ribosomal subunit protein uS3.